The chain runs to 159 residues: Phosphopantetheine adenylyltransferase (159 aa).

Residue threonine 10 participates in substrate binding. ATP-binding positions include 10-11 (TF) and histidine 18. Residues lysine 42, methionine 74, and arginine 88 each coordinate substrate. ATP contacts are provided by residues 89–91 (GLR), glutamate 99, and 124–130 (WSFISSS).

Belongs to the bacterial CoaD family. In terms of assembly, homohexamer. It depends on Mg(2+) as a cofactor.

It is found in the cytoplasm. The catalysed reaction is (R)-4'-phosphopantetheine + ATP + H(+) = 3'-dephospho-CoA + diphosphate. It functions in the pathway cofactor biosynthesis; coenzyme A biosynthesis; CoA from (R)-pantothenate: step 4/5. In terms of biological role, reversibly transfers an adenylyl group from ATP to 4'-phosphopantetheine, yielding dephospho-CoA (dPCoA) and pyrophosphate. This Yersinia pseudotuberculosis serotype O:3 (strain YPIII) protein is Phosphopantetheine adenylyltransferase.